Consider the following 418-residue polypeptide: Serine hydroxymethyltransferase (418 aa).

(6S)-5,6,7,8-tetrahydrofolate-binding positions include Leu-121 and 125–127 (GHL). Lys-230 carries the N6-(pyridoxal phosphate)lysine modification. Residues Glu-246 and 355 to 357 (SPF) each bind (6S)-5,6,7,8-tetrahydrofolate.

This sequence belongs to the SHMT family. As to quaternary structure, homodimer. Pyridoxal 5'-phosphate serves as cofactor.

Its subcellular location is the cytoplasm. It carries out the reaction (6R)-5,10-methylene-5,6,7,8-tetrahydrofolate + glycine + H2O = (6S)-5,6,7,8-tetrahydrofolate + L-serine. Its pathway is one-carbon metabolism; tetrahydrofolate interconversion. It functions in the pathway amino-acid biosynthesis; glycine biosynthesis; glycine from L-serine: step 1/1. In terms of biological role, catalyzes the reversible interconversion of serine and glycine with tetrahydrofolate (THF) serving as the one-carbon carrier. This reaction serves as the major source of one-carbon groups required for the biosynthesis of purines, thymidylate, methionine, and other important biomolecules. Also exhibits THF-independent aldolase activity toward beta-hydroxyamino acids, producing glycine and aldehydes, via a retro-aldol mechanism. In Streptococcus pneumoniae serotype 2 (strain D39 / NCTC 7466), this protein is Serine hydroxymethyltransferase.